Reading from the N-terminus, the 413-residue chain is Probable alpha-amylase 2 (413 aa).

Substrate contacts are provided by residues 74–75 and 191–196; these read YL and RFDFAR. Catalysis depends on D193, which acts as the Nucleophile. The active-site Proton donor is E218. Substrate is bound by residues W220, S222, Q239, D246, K280, 286 to 288, H299, Q305, K386, and W411; that span reads GWW.

This sequence belongs to the glycosyl hydrolase 13 family. Ca(2+) serves as cofactor. In terms of tissue distribution, expressed in developing siliques.

Its subcellular location is the cytoplasm. The protein resides in the cytosol. The enzyme catalyses Endohydrolysis of (1-&gt;4)-alpha-D-glucosidic linkages in polysaccharides containing three or more (1-&gt;4)-alpha-linked D-glucose units.. Functionally, probable alpha-amylase that does not seem to be required for breakdown of transitory starch in leaves. This is Probable alpha-amylase 2 (AMY2) from Arabidopsis thaliana (Mouse-ear cress).